The sequence spans 108 residues: Nucleoid-associated protein CPS_3743 (108 aa).

The segment at Asn87 to Phe108 is disordered.

Belongs to the YbaB/EbfC family. As to quaternary structure, homodimer.

The protein resides in the cytoplasm. It localises to the nucleoid. Its function is as follows. Binds to DNA and alters its conformation. May be involved in regulation of gene expression, nucleoid organization and DNA protection. This chain is Nucleoid-associated protein CPS_3743, found in Colwellia psychrerythraea (strain 34H / ATCC BAA-681) (Vibrio psychroerythus).